The following is a 73-amino-acid chain: MNNYMINPSIVDLLTKVDNRYSLVTVTSRRARQIIDGDEALVNVEDAYKPLTTAIHEVNAGKVSYESLVEGIK.

This sequence belongs to the RNA polymerase subunit omega family. As to quaternary structure, the RNAP catalytic core consists of 2 alpha, 1 beta, 1 beta' and 1 omega subunit. When a sigma factor is associated with the core the holoenzyme is formed, which can initiate transcription.

The catalysed reaction is RNA(n) + a ribonucleoside 5'-triphosphate = RNA(n+1) + diphosphate. Its function is as follows. Promotes RNA polymerase assembly. Latches the N- and C-terminal regions of the beta' subunit thereby facilitating its interaction with the beta and alpha subunits. This chain is DNA-directed RNA polymerase subunit omega, found in Clostridium novyi (strain NT).